We begin with the raw amino-acid sequence, 578 residues long: MGARCLALLLLYGTLLLLLLLPQLPLAGAATRYYTFNVKLQNVTRLCNTRAIPTVNGKFPGPKIVTREGDRVVVKVVNNIKDNITIHWHGVRQMRTGWSDGPAYVTQCPIQTGQSYVYNFTINGQRGTLFWHAHVSWLRSTLYGPIIILPKAGLPLPFTEPHKDVPIIFGEWFNADPEAIVAQALQTGGGPNVSDAYTINGLPGPLYNCSSKDTFRLKVQPGKMYLLRLINAALNDELFFSVANHTLTVVDVDASYVKPFDTDVVLITPGQTTNVLLRAKPTAEAAGATHLMMARPYATGRPGTYDNTTVAAVLEYAPPGHIKSLPLLRPSLPALNDTAFAAGFAAKLRSLACPDYPSNVPRRVDKPFFFAVGLGTTPCPGSNNQTCQGPTNTTKFTASINNVSFDMPTTALLQAHYTGQSAGVYTADFPASPLEPFNYTGTPPNNTNVSNGTRVVVLPYNASVEVVLQDTSILGAESHPLHLHGFDFFVVGQGTGNYDPSKHPAEFNLVDPVQRNTVGVPAGGWVAIRFFADNPGVWFMHCHLEVHTTWGLKMAWVVNDGPLPEQKLMPPPSDLPMC.

The first 29 residues, 1–29, serve as a signal peptide directing secretion; it reads MGARCLALLLLYGTLLLLLLLPQLPLAGA. Plastocyanin-like domains follow at residues 37–153 and 163–319; these read NVKL…PKAG and KDVP…YAPP. N-linked (GlcNAc...) asparagine glycosylation is found at asparagine 42 and asparagine 83. Histidine 87 and histidine 89 together coordinate Cu cation. Asparagine 119 carries N-linked (GlcNAc...) asparagine glycosylation. Cu cation-binding residues include histidine 132 and histidine 134. 13 N-linked (GlcNAc...) asparagine glycosylation sites follow: asparagine 192, asparagine 208, asparagine 244, asparagine 307, asparagine 336, asparagine 384, asparagine 392, asparagine 402, asparagine 438, asparagine 445, asparagine 448, asparagine 451, and asparagine 461. The Plastocyanin-like 3 domain occupies 428-562; that stretch reads DFPASPLEPF…KMAWVVNDGP (135 aa). Residues histidine 479, histidine 482, histidine 484, histidine 541, cysteine 542, histidine 543, and histidine 547 each coordinate Cu cation.

The protein belongs to the multicopper oxidase family. Cu cation serves as cofactor.

The protein localises to the secreted. Its subcellular location is the extracellular space. The protein resides in the apoplast. It carries out the reaction 4 hydroquinone + O2 = 4 benzosemiquinone + 2 H2O. In terms of biological role, lignin degradation and detoxification of lignin-derived products. This chain is Laccase-10 (LAC10), found in Oryza sativa subsp. japonica (Rice).